A 592-amino-acid polypeptide reads, in one-letter code: Putative uric acid sigma-54-dependent transcriptional regulator UacR (592 aa).

A PAS domain is found at 158-229; it reads ISKIFATMID…HMQHIVSWDD (72 aa). A Sigma-54 factor interaction domain is found at 272 to 502; that stretch reads LVGECRVMRQ…LSNLMEYLVN (231 aa). ATP contacts are provided by residues 300 to 307 and 364 to 373; these read GESGTGKE and ANTGTLFLDE. Residues 567–585 constitute a DNA-binding region (H-T-H motif); sequence KQVADELGIGIATLYRKIK.

Essential for both formate-dependent and formate-independent uric acid degradation. May be directly involved in the transcription of uacF in response to hypoxanthine, xanthine, and uric acid. This is Putative uric acid sigma-54-dependent transcriptional regulator UacR from Escherichia coli (strain K12).